The primary structure comprises 86 residues: Sec-independent protein translocase protein TatA (86 aa).

The helical transmembrane segment at 1–21 threads the bilayer; sequence MGGISIWQLLIIAVIVVLLFG. The tract at residues 42-86 is disordered; sequence AIGDDNQPQQAQKTSSDADFETKNITEKQSVAQSETSESKNKEQV. Polar residues-rich tracts occupy residues 47–58 and 68–77; these read NQPQQAQKTSSD and EKQSVAQSET.

It belongs to the TatA/E family. The Tat system comprises two distinct complexes: a TatABC complex, containing multiple copies of TatA, TatB and TatC subunits, and a separate TatA complex, containing only TatA subunits. Substrates initially bind to the TatABC complex, which probably triggers association of the separate TatA complex to form the active translocon.

The protein resides in the cell inner membrane. Part of the twin-arginine translocation (Tat) system that transports large folded proteins containing a characteristic twin-arginine motif in their signal peptide across membranes. TatA could form the protein-conducting channel of the Tat system. The sequence is that of Sec-independent protein translocase protein TatA from Photorhabdus laumondii subsp. laumondii (strain DSM 15139 / CIP 105565 / TT01) (Photorhabdus luminescens subsp. laumondii).